Consider the following 231-residue polypeptide: Lipoprotein-releasing system ATP-binding protein LolD (231 aa).

Positions 11–231 constitute an ABC transporter domain; sequence LQAEHLGKVY…HMENGRLQPD (221 aa). 47–54 provides a ligand contact to ATP; sequence GASGSGKS.

Belongs to the ABC transporter superfamily. Lipoprotein translocase (TC 3.A.1.125) family. As to quaternary structure, the complex is composed of two ATP-binding proteins (LolD) and two transmembrane proteins (LolC and LolE).

Its subcellular location is the cell inner membrane. Functionally, part of the ABC transporter complex LolCDE involved in the translocation of mature outer membrane-directed lipoproteins, from the inner membrane to the periplasmic chaperone, LolA. Responsible for the formation of the LolA-lipoprotein complex in an ATP-dependent manner. The protein is Lipoprotein-releasing system ATP-binding protein LolD of Bordetella bronchiseptica (strain ATCC BAA-588 / NCTC 13252 / RB50) (Alcaligenes bronchisepticus).